A 520-amino-acid chain; its full sequence is Ribonuclease Y (520 aa).

Residues 4-24 (VSGILLVLIGLLAGVGLGVLL) form a helical membrane-spanning segment. The 61-residue stretch at 210-270 (TVSVVNLPNE…VRREVARVSL (61 aa)) folds into the KH domain. Residues 336-429 (VLQHSREVAF…VQAADALSGA (94 aa)) enclose the HD domain.

The protein belongs to the RNase Y family.

It is found in the cell membrane. Endoribonuclease that initiates mRNA decay. This is Ribonuclease Y from Syntrophobacter fumaroxidans (strain DSM 10017 / MPOB).